An 809-amino-acid chain; its full sequence is Integrin beta pat-3 (809 aa).

The first 19 residues, 1-19, serve as a signal peptide directing secretion; it reads MPPSTSLLLLAALLPFALP. Residues 20–737 are Extracellular-facing; that stretch reads ASDWKTGEVT…KHKDCPPPVP (718 aa). N-linked (GlcNAc...) asparagine glycosylation is found at Asn47, Asn141, Asn269, Asn373, and Asn400. The 200-residue stretch at 153 to 352 folds into the VWFA domain; sequence DLYYLMDLSY…IFAVTKNNQD (200 aa). Cystine bridges form between Cys476–Cys496, Cys489–Cys499, Cys501–Cys510, Cys512–Cys543, Cys526–Cys541, Cys535–Cys546, Cys548–Cys563, Cys565–Cys586, Cys570–Cys584, Cys578–Cys589, Cys591–Cys600, Cys602–Cys625, Cys609–Cys623, Cys617–Cys628, and Cys630–Cys644. I-EGF domains lie at 476–511, 512–564, 565–601, and 602–645; these read CERQ…KYCE, CNRP…EFCE, CDNF…RACE, and CPIS…AKCE. Asn530 carries N-linked (GlcNAc...) asparagine glycosylation. N-linked (GlcNAc...) asparagine glycosylation is found at Asn672, Asn693, and Asn721. A helical transmembrane segment spans residues 738–758; it reads VLAIVLGVIAGIVILGILLLL. Topologically, residues 759–809 are cytoplasmic; that stretch reads LWKLLTVLHDRSEYATFNNERLMAKWDTNENPIYKQATTTFKNPVYAGKAN. Tyr792 bears the Phosphotyrosine mark.

The protein belongs to the integrin beta chain family. As to quaternary structure, heterodimer of an alpha and a beta subunit. Interacts with alpha subunit ina-1. Interacts with alpha subunit pat-2. Component of an integrin containing attachment complex, composed of at least pat-2, pat-3, pat-4, pat-6, unc-52, unc-97 and unc-112. May interact with tns-1 (via C-terminus). In terms of processing, phosphorylated. Dephosphorylated by dep-1. Expressed in body wall muscles (at protein level). Expressed in gonadal sheath cells and spermatheca. Expressed in vulval cells and along the basal laminae that separate the vulval cells from the uterus (at the protein level).

The protein resides in the cell membrane. Its subcellular location is the lateral cell membrane. The protein localises to the basolateral cell membrane. It localises to the cytoplasm. It is found in the myofibril. The protein resides in the sarcomere. Its subcellular location is the m line. The protein localises to the cell junction. It localises to the focal adhesion. Integrin alpha ina-1/beta pat-3 is a receptor for laminin. Integrin alpha pat-2/beta pat-3 recognizes the sequence R-G-D in its ligands. Plays a role in cell migration, morphogenesis and probably in cell-cell interactions. During gonad morphogenesis, involved in distal tip cell (DTC)-mediated guidance of gonad elongation, in maintaining their sharp tapering morphology and in their migration. Component of an integrin containing attachment complex, which is required for muscle development and maintenance. Involved in the assembly of dense bodies and M lines during body wall muscle embryonic development by recruiting one of their components, cpna-1, to integrin-mediated attachment sites. May play a similar role in the assembly of dense bodies in gonadal myoepithelial sheath cells. Probably by acting as a receptor for apoptotic cells, plays a role in the clearance of apoptotic cells during mid-embryogenesis. Required for ovulation. Dephosphorylated, probably within the alpha pat-2/beta pat-3 integrin receptor complex, by the phosphatase dep-1, which leads to down-stream effects including the negative regulation of let-23 signaling and vulval induction. When unphosphosphorylated, recruits the cytoplasmic adapter protein tln-1 to the plasma membrane of secondary vulval precursor cells. This promotes the linking of focal adhesion sites to the F-actin cytoskeleton, and it also acts to restrict the mobility of the let-23 receptor on the plasma membrane of vulval cells which thereby attenuates let-23 signaling. Plays a role in axon regeneration after injury. This is Integrin beta pat-3 from Caenorhabditis elegans.